The primary structure comprises 651 residues: Bromodomain-containing protein 7 (651 aa).

Lysine 21 is covalently cross-linked (Glycyl lysine isopeptide (Lys-Gly) (interchain with G-Cter in SUMO2)). The interval 34 to 103 (VTELSTGSSG…RDRAENEVDR (70 aa)) is disordered. A compositionally biased stretch (polar residues) spans 35 to 45 (TELSTGSSGHD). Positions 47 to 57 (SLFEDRSDHDK) are enriched in basic and acidic residues. A compositionally biased stretch (basic residues) spans 58 to 69 (HKDRKRKKRKKG). The Nuclear localization signal signature appears at 65–96 (KRKKGEKQAPGEEKGRKRRRVKEDKKKRDRDR). A compositionally biased stretch (basic and acidic residues) spans 70 to 103 (EKQAPGEEKGRKRRRVKEDKKKRDRDRAENEVDR). Glycyl lysine isopeptide (Lys-Gly) (interchain with G-Cter in SUMO2) cross-links involve residues lysine 127, lysine 186, lysine 197, lysine 201, lysine 212, and lysine 241. Residues 131 to 235 (VEQTPLQEAL…HSGMKILSQE (105 aa)) form the Bromo domain. The interval 252–316 (KTRKQKERTD…RSSNSEREHE (65 aa)) is disordered. A phosphoserine mark is found at serine 279 and serine 289. Positions 290-316 (PAKDNKRKDKDVLEDKWRSSNSEREHE) are enriched in basic and acidic residues. Lysine 305 is covalently cross-linked (Glycyl lysine isopeptide (Lys-Gly) (interchain with G-Cter in SUMO2)). At lysine 328 the chain carries N6-acetyllysine. Residue lysine 344 forms a Glycyl lysine isopeptide (Lys-Gly) (interchain with G-Cter in SUMO2) linkage. Position 380 is a phosphoserine (serine 380). Lysine 389 is covalently cross-linked (Glycyl lysine isopeptide (Lys-Gly) (interchain with G-Cter in SUMO2)). Phosphoserine is present on residues serine 475, serine 482, and serine 483. Residues 536–567 (SEEAEVFQRKLDETTRLLRELQEAQNERLSTR) are a coiled coil. Residue serine 621 is modified to Phosphoserine.

As to quaternary structure, interacts with IRF2 and HNRPUL1. Interacts (via N-terminus) with TP53. Interacts (via C-terminus) with EP300. Interacts with BRCA1. Interacts (via bromo domain) with histone H3 (via N-terminus) acetylated at 'Lys-14' (H3K14ac). Has low affinity for histone H3 acetylated at 'Lys-9' (H3K9ac). Has the highest affinity for histone H3 that is acetylated both at 'Lys-9' (H3K9ac) and at 'Lys-14' (H3K14ac). Has very low affinity for non-acetylated histone H3. Interacts (via bromo domain) with histone H4 (via N-terminus) acetylated at 'Lys-8' (H3K8ac) (in vitro). Interacts with TRIM24, PTPN13 and DVL1. Identified in a complex with SMARCA4/BRG1, SMARCC1/BAF155, SMARCE1/BAF57, DPF2/BAF45D and ARID2, subunits of the SWI/SNF-B (PBAF) chromatin remodeling complex. In terms of tissue distribution, ubiquitous.

The protein resides in the nucleus. The protein localises to the chromosome. Acts both as coactivator and as corepressor. May play a role in chromatin remodeling. Transcriptional corepressor that down-regulates the expression of target genes. Binds to target promoters, leading to increased histone H3 acetylation at 'Lys-9' (H3K9ac). Binds to the ESR1 promoter. Recruits BRCA1 and POU2F1 to the ESR1 promoter. Coactivator for TP53-mediated activation of transcription of a set of target genes. Required for TP53-mediated cell-cycle arrest in response to oncogene activation. Promotes acetylation of TP53 at 'Lys-382', and thereby promotes efficient recruitment of TP53 to target promoters. Inhibits cell cycle progression from G1 to S phase. Activator of the Wnt signaling pathway in a DVL1-dependent manner by negatively regulating the GSK3B phosphotransferase activity. Induces dephosphorylation of GSK3B at 'Tyr-216'. Down-regulates TRIM24-mediated activation of transcriptional activation by AR. This is Bromodomain-containing protein 7 (Brd7) from Mus musculus (Mouse).